Here is a 323-residue protein sequence, read N- to C-terminus: Germination protease (323 aa).

Positions 1–6 are excised as a propeptide; it reads MSVRTD.

It belongs to the peptidase A25 family. Homotetramer. Autoproteolytically processed. The inactive tetrameric zymogen termed p46 autoprocesses to a smaller form termed p41, which is active only during spore germination.

The enzyme catalyses Endopeptidase action with P4 Glu or Asp, P1 preferably Glu &gt; Asp, P1' hydrophobic and P2' Ala.. Functionally, initiates the rapid degradation of small, acid-soluble proteins during spore germination. The sequence is that of Germination protease from Clostridium tetani (strain Massachusetts / E88).